The chain runs to 82 residues: UPF0154 protein SMU_1719c (82 aa).

Residues 4–24 form a helical membrane-spanning segment; sequence FLWILLVIIALLAGLVGGTFI.

Belongs to the UPF0154 family.

Its subcellular location is the membrane. The polypeptide is UPF0154 protein SMU_1719c (Streptococcus mutans serotype c (strain ATCC 700610 / UA159)).